A 207-amino-acid polypeptide reads, in one-letter code: Guanylate kinase (207 aa).

The Guanylate kinase-like domain maps to 4 to 184 (GTLYIVSAPS…ALMDFKAIIR (181 aa)). 11 to 18 (APSGAGKS) provides a ligand contact to ATP.

The protein belongs to the guanylate kinase family.

The protein localises to the cytoplasm. It carries out the reaction GMP + ATP = GDP + ADP. In terms of biological role, essential for recycling GMP and indirectly, cGMP. The protein is Guanylate kinase of Vibrio vulnificus (strain CMCP6).